Here is a 290-residue protein sequence, read N- to C-terminus: 33 kDa chaperonin (290 aa).

2 cysteine pairs are disulfide-bonded: cysteine 235–cysteine 237 and cysteine 268–cysteine 271.

Belongs to the HSP33 family. In terms of processing, under oxidizing conditions two disulfide bonds are formed involving the reactive cysteines. Under reducing conditions zinc is bound to the reactive cysteines and the protein is inactive.

The protein resides in the cytoplasm. Functionally, redox regulated molecular chaperone. Protects both thermally unfolding and oxidatively damaged proteins from irreversible aggregation. Plays an important role in the bacterial defense system toward oxidative stress. In Streptococcus pyogenes serotype M6 (strain ATCC BAA-946 / MGAS10394), this protein is 33 kDa chaperonin.